The chain runs to 136 residues: Large ribosomal subunit protein eL27B (136 aa).

This sequence belongs to the eukaryotic ribosomal protein eL27 family. Component of the large ribosomal subunit (LSU). Mature yeast ribosomes consist of a small (40S) and a large (60S) subunit. The 40S small subunit contains 1 molecule of ribosomal RNA (18S rRNA) and at least 33 different proteins. The large 60S subunit contains 3 rRNA molecules (25S, 5.8S and 5S rRNA) and at least 46 different proteins.

It is found in the cytoplasm. Functionally, component of the ribosome, a large ribonucleoprotein complex responsible for the synthesis of proteins in the cell. The small ribosomal subunit (SSU) binds messenger RNAs (mRNAs) and translates the encoded message by selecting cognate aminoacyl-transfer RNA (tRNA) molecules. The large subunit (LSU) contains the ribosomal catalytic site termed the peptidyl transferase center (PTC), which catalyzes the formation of peptide bonds, thereby polymerizing the amino acids delivered by tRNAs into a polypeptide chain. The nascent polypeptides leave the ribosome through a tunnel in the LSU and interact with protein factors that function in enzymatic processing, targeting, and the membrane insertion of nascent chains at the exit of the ribosomal tunnel. The chain is Large ribosomal subunit protein eL27B (rpl2702) from Schizosaccharomyces pombe (strain 972 / ATCC 24843) (Fission yeast).